We begin with the raw amino-acid sequence, 179 residues long: ATP-dependent protease subunit HslV (179 aa).

Residue threonine 7 is part of the active site. 3 residues coordinate Na(+): glycine 162, cysteine 165, and threonine 168.

The protein belongs to the peptidase T1B family. HslV subfamily. As to quaternary structure, a double ring-shaped homohexamer of HslV is capped on each side by a ring-shaped HslU homohexamer. The assembly of the HslU/HslV complex is dependent on binding of ATP.

It is found in the cytoplasm. The catalysed reaction is ATP-dependent cleavage of peptide bonds with broad specificity.. With respect to regulation, allosterically activated by HslU binding. In terms of biological role, protease subunit of a proteasome-like degradation complex believed to be a general protein degrading machinery. The protein is ATP-dependent protease subunit HslV of Bordetella pertussis (strain Tohama I / ATCC BAA-589 / NCTC 13251).